The following is a 147-amino-acid chain: MVVKQQKDASKPAHFFHQVIVIALVLFVSKIIESFMPIPMPASVIGLVLLFVLLCTGAVKLGEVEKVGTTLTNNIGLLFVPAGISVVNSLGVISQAPFLIIGLIIVSTILLLICTGYVTQIIMKVTSRSKGDKVTKKIKIEEAQAHD.

The next 4 helical transmembrane spans lie at 12–32 (PAHF…SKII), 35–55 (FMPI…VLLC), 74–94 (NIGL…GVIS), and 98–118 (FLII…TGYV).

Belongs to the CidA/LrgA family. LrgA subfamily.

The protein localises to the cell membrane. Functionally, inhibits the expression or activity of extracellular murein hydrolases by interacting, possibly with LrgB, with the holin-like proteins CidA and/or CidB. The LrgAB and CidAB proteins may affect the proton motive force of the membrane. May be involved in programmed cell death (PCD), possibly triggering PCD in response to antibiotics and environmental stresses. This Staphylococcus aureus (strain USA300) protein is Antiholin-like protein LrgA.